Consider the following 199-residue polypeptide: GTP cyclohydrolase-2 (199 aa).

49-53 (RIHSE) is a GTP binding site. Cysteine 54, cysteine 65, and cysteine 67 together coordinate Zn(2+). Residues glutamine 70, 92–94 (EGR), and threonine 114 each bind GTP. Aspartate 126 acts as the Proton acceptor in catalysis. The active-site Nucleophile is the arginine 128. 2 residues coordinate GTP: threonine 149 and lysine 154.

This sequence belongs to the GTP cyclohydrolase II family. As to quaternary structure, homodimer. Zn(2+) serves as cofactor.

The catalysed reaction is GTP + 4 H2O = 2,5-diamino-6-hydroxy-4-(5-phosphoribosylamino)-pyrimidine + formate + 2 phosphate + 3 H(+). It participates in cofactor biosynthesis; riboflavin biosynthesis; 5-amino-6-(D-ribitylamino)uracil from GTP: step 1/4. In terms of biological role, catalyzes the conversion of GTP to 2,5-diamino-6-ribosylamino-4(3H)-pyrimidinone 5'-phosphate (DARP), formate and pyrophosphate. This Blochmanniella pennsylvanica (strain BPEN) protein is GTP cyclohydrolase-2.